Reading from the N-terminus, the 198-residue chain is Peptidyl-tRNA hydrolase (198 aa).

Tyr-15 contributes to the tRNA binding site. The active-site Proton acceptor is His-20. The tRNA site is built by Phe-66, Asn-68, and Asn-114.

Belongs to the PTH family. Monomer.

The protein localises to the cytoplasm. It carries out the reaction an N-acyl-L-alpha-aminoacyl-tRNA + H2O = an N-acyl-L-amino acid + a tRNA + H(+). In terms of biological role, hydrolyzes ribosome-free peptidyl-tRNAs (with 1 or more amino acids incorporated), which drop off the ribosome during protein synthesis, or as a result of ribosome stalling. Its function is as follows. Catalyzes the release of premature peptidyl moieties from peptidyl-tRNA molecules trapped in stalled 50S ribosomal subunits, and thus maintains levels of free tRNAs and 50S ribosomes. The protein is Peptidyl-tRNA hydrolase of Cupriavidus metallidurans (strain ATCC 43123 / DSM 2839 / NBRC 102507 / CH34) (Ralstonia metallidurans).